Consider the following 91-residue polypeptide: Large ribosomal subunit protein bL31 (91 aa).

A disordered region spans residues 62–91; that stretch reads RRKYSGTKPQQTAKGKKAAPKSTPKTNKKG.

Belongs to the bacterial ribosomal protein bL31 family. Type A subfamily. Part of the 50S ribosomal subunit.

Its function is as follows. Binds the 23S rRNA. This Thermosynechococcus vestitus (strain NIES-2133 / IAM M-273 / BP-1) protein is Large ribosomal subunit protein bL31.